A 1118-amino-acid chain; its full sequence is Repetin (1118 aa).

The tract at residues Met1–Ser91 is S-100-like. EF-hand domains lie at Lys13–Pro48 and Asn49–Ala84. Residues Ser27, Glu32, Asp62, Asp64, Asn66, Tyr68, and Glu73 each contribute to the Ca(2+) site. The tract at residues Tyr94–Tyr1118 is disordered. A compositionally biased stretch (basic and acidic residues) spans Ser100–Ser115. Residues Ser138–Asp148 show a composition bias toward polar residues. Basic and acidic residues-rich tracts occupy residues Gln149–Pro164 and Phe172–Thr186. Over residues Gly237–Gly252 the composition is skewed to low complexity. The segment covering Tyr259 to Asn299 has biased composition (polar residues). Repeat copies occupy residues Gln273–Ser284, Gln285–Gly296, Gln297–Glu308, Gln309–Gly320, Gln321–Gly332, Gln333–Gly344, Gln345–Gly356, Gln357–Gly368, Gln369–Gly380, Gln381–Gly392, Gln393–Gly404, Gln405–Gly416, Gln417–Gly428, Gln429–Gly440, Gln441–Gly452, Gln453–Gly464, Gln465–Gly476, Gln477–His488, Arg489–Gly500, Gln501–Gly512, Gln513–His524, Arg525–Gly536, Gln537–Gly548, Gln549–His560, Arg561–Asp572, Gln573–Gly584, Gln585–His596, Arg597–Asp608, Gln609–Gly620, Gln621–His632, Gln633–Gly644, His645–Gly656, Gln657–Gly668, Gln669–Gly680, Gln681–Gly692, Gln693–Gly704, Gln705–Gly716, Gln717–Gly728, Gln729–Gly740, Gln741–Gly752, Gln753–Gly764, Gln765–His776, Arg777–Gly788, Gln789–Gly800, Gln801–His812, Arg813–Asp824, Gln825–Gly836, and Gln837–Gly848. The segment at Gln273–Gly848 is 48 X 12 AA approximate tandem repeats of Q-[KT]-[GD]-[RS]-Q-[DG]-Q-S-[PS]-H-X-G. The segment at Gln321 to Gly764 is 22 X 12 AA approximate tandem repeats of Q-K-G-R-Q-D-Q-S-P-H-Q-G. Basic and acidic residues-rich tracts occupy residues Gly347–Gln363 and Gly371–Gln387. Over residues Asp434–Lys466 the composition is skewed to polar residues. Over residues Gly467–Gln481 the composition is skewed to basic and acidic residues. Composition is skewed to polar residues over residues Asp482–Tyr535 and Leu543–His570. Composition is skewed to polar residues over residues Asp587 to His606 and Gly616 to Gln643. Positions Asp710 to His726 are enriched in polar residues. Composition is skewed to basic and acidic residues over residues Gly731 to Gln747 and Gly755 to Gln769. Polar residues-rich tracts occupy residues Leu795–His822, Ser833–Gly848, and Thr855–Ser864. Over residues Leu865–Tyr875 the composition is skewed to basic and acidic residues. Residues Val876–Asn889 show a composition bias toward polar residues. 5 stretches are compositionally biased toward basic and acidic residues: residues Ser890–Gln908, Glu947–Glu965, Thr978–Asn998, Gln1005–Tyr1045, and Pro1056–Glu1065.

Belongs to the S100-fused protein family. Potential substrate of transglutaminase. Some arginines are probably converted to citrullines by peptidylarginine deimidase. In terms of tissue distribution, detectable in the stratified internal epithelia of forestomach and tongue and to a lesser degree in normal skin epidermis, where it is restricted to the differentiated suprabasal cell layers. Overexpressed in skin tumors.

It is found in the secreted. It localises to the extracellular space. Its subcellular location is the extracellular matrix. Functionally, involved in the cornified cell envelope formation. Multifunctional epidermal matrix protein. In Mus musculus (Mouse), this protein is Repetin (Rptn).